The primary structure comprises 346 residues: Biotin synthase (346 aa).

One can recognise a Radical SAM core domain in the interval 38 to 256 (RQVQVSTLLS…IAVARIMMPT (219 aa)). Residues cysteine 53, cysteine 57, and cysteine 60 each contribute to the [4Fe-4S] cluster site. Positions 97, 128, 188, and 260 each coordinate [2Fe-2S] cluster.

This sequence belongs to the radical SAM superfamily. Biotin synthase family. In terms of assembly, homodimer. Requires [4Fe-4S] cluster as cofactor. It depends on [2Fe-2S] cluster as a cofactor.

The catalysed reaction is (4R,5S)-dethiobiotin + (sulfur carrier)-SH + 2 reduced [2Fe-2S]-[ferredoxin] + 2 S-adenosyl-L-methionine = (sulfur carrier)-H + biotin + 2 5'-deoxyadenosine + 2 L-methionine + 2 oxidized [2Fe-2S]-[ferredoxin]. It participates in cofactor biosynthesis; biotin biosynthesis; biotin from 7,8-diaminononanoate: step 2/2. Catalyzes the conversion of dethiobiotin (DTB) to biotin by the insertion of a sulfur atom into dethiobiotin via a radical-based mechanism. In Shigella boydii serotype 18 (strain CDC 3083-94 / BS512), this protein is Biotin synthase.